The following is a 295-amino-acid chain: Probable protein phosphatase 2C 54 (295 aa).

Positions 78 to 289 (GHGVVSVMGR…ENINVIVIDL (212 aa)) constitute a PPM-type phosphatase domain. Residues D112, G113, D228, and E280 each coordinate Mn(2+).

It belongs to the PP2C family. It depends on Mg(2+) as a cofactor. Mn(2+) serves as cofactor.

It carries out the reaction O-phospho-L-seryl-[protein] + H2O = L-seryl-[protein] + phosphate. The enzyme catalyses O-phospho-L-threonyl-[protein] + H2O = L-threonyl-[protein] + phosphate. This is Probable protein phosphatase 2C 54 from Arabidopsis thaliana (Mouse-ear cress).